Here is a 136-residue protein sequence, read N- to C-terminus: Large ribosomal subunit protein uL16c (136 aa).

The protein belongs to the universal ribosomal protein uL16 family. As to quaternary structure, part of the 50S ribosomal subunit.

It localises to the plastid. The protein resides in the chloroplast. This Citrus sinensis (Sweet orange) protein is Large ribosomal subunit protein uL16c.